The following is a 198-amino-acid chain: Recombination protein RecR (198 aa).

The C4-type zinc finger occupies 57-72 (CAMCNTFTEHEVCETC). A Toprim domain is found at 80 to 175 (ALLCVVETPG…KVSRLARGVP (96 aa)).

This sequence belongs to the RecR family.

May play a role in DNA repair. It seems to be involved in an RecBC-independent recombinational process of DNA repair. It may act with RecF and RecO. The protein is Recombination protein RecR of Janthinobacterium sp. (strain Marseille) (Minibacterium massiliensis).